Consider the following 461-residue polypeptide: Cytochrome c biogenesis protein CcsB (461 aa).

3 helical membrane passes run 32–52, 91–111, and 178–198; these read LRLA…GTVI, TWWF…CTFT, and IGPI…IWGA.

It belongs to the Ccs1/CcsB family. As to quaternary structure, may interact with CcsA.

Its subcellular location is the cellular thylakoid membrane. Required during biogenesis of c-type cytochromes (cytochrome c6 and cytochrome f) at the step of heme attachment. This Trichormus variabilis (strain ATCC 29413 / PCC 7937) (Anabaena variabilis) protein is Cytochrome c biogenesis protein CcsB.